Here is a 163-residue protein sequence, read N- to C-terminus: CASP-like protein 1C2 (163 aa).

Topologically, residues 1–6 (MAKSNK) are cytoplasmic. Residues 7–27 (IFTNTLRLLALAATVVAIVFM) traverse the membrane as a helical segment. Residues 28-52 (VTSHDSAQVLNLTFTAKYSNTPAFK) lie on the Extracellular side of the membrane. Asn-38 carries N-linked (GlcNAc...) asparagine glycosylation. A helical transmembrane segment spans residues 53–73 (FLVIGEAIAGGYTVISILLSF). Residues 74-79 (KGLFWR) are Cytoplasmic-facing. The chain crosses the membrane as a helical span at residues 80 to 100 (LIVILDMVTTVLLTSSISAAL). Topologically, residues 101–128 (AIAQVGKKGNTHAGWLPICGQVPDFCDY) are extracellular. The helical transmembrane segment at 129-149 (VTIALIAGFAAAIIYFVLLLC) threads the bilayer. The Cytoplasmic segment spans residues 150–163 (SLYVVLSPIFVATP).

It belongs to the Casparian strip membrane proteins (CASP) family. In terms of assembly, homodimer and heterodimers.

The protein resides in the cell membrane. The sequence is that of CASP-like protein 1C2 from Populus trichocarpa (Western balsam poplar).